The sequence spans 28 residues: Chaperonin GroEL (28 aa).

It belongs to the chaperonin (HSP60) family. In terms of assembly, forms a cylinder of 14 subunits composed of two heptameric rings stacked back-to-back. Interacts with the co-chaperonin GroES.

It localises to the cytoplasm. It catalyses the reaction ATP + H2O + a folded polypeptide = ADP + phosphate + an unfolded polypeptide.. Functionally, together with its co-chaperonin GroES, plays an essential role in assisting protein folding. The GroEL-GroES system forms a nano-cage that allows encapsulation of the non-native substrate proteins and provides a physical environment optimized to promote and accelerate protein folding. The polypeptide is Chaperonin GroEL (Mycolicibacterium smegmatis (Mycobacterium smegmatis)).